The following is a 108-amino-acid chain: Nucleoid-associated protein mma_2329 (108 aa).

It belongs to the YbaB/EbfC family. As to quaternary structure, homodimer.

The protein resides in the cytoplasm. It is found in the nucleoid. Functionally, binds to DNA and alters its conformation. May be involved in regulation of gene expression, nucleoid organization and DNA protection. The sequence is that of Nucleoid-associated protein mma_2329 from Janthinobacterium sp. (strain Marseille) (Minibacterium massiliensis).